Consider the following 420-residue polypeptide: 3-phosphoshikimate 1-carboxyvinyltransferase (420 aa).

Residues Lys26, Ser27, and Arg31 each coordinate 3-phosphoshikimate. Lys26 contributes to the phosphoenolpyruvate binding site. Phosphoenolpyruvate is bound by residues Gly97 and Arg125. Residues Ser170, Ser171, Gln172, Asp297, Asn320, and Lys324 each contribute to the 3-phosphoshikimate site. Gln172 is a binding site for phosphoenolpyruvate. Asp297 acts as the Proton acceptor in catalysis. The phosphoenolpyruvate site is built by Arg328, Arg375, and Lys400.

The protein belongs to the EPSP synthase family. In terms of assembly, monomer.

The protein resides in the cytoplasm. The enzyme catalyses 3-phosphoshikimate + phosphoenolpyruvate = 5-O-(1-carboxyvinyl)-3-phosphoshikimate + phosphate. Its pathway is metabolic intermediate biosynthesis; chorismate biosynthesis; chorismate from D-erythrose 4-phosphate and phosphoenolpyruvate: step 6/7. Functionally, catalyzes the transfer of the enolpyruvyl moiety of phosphoenolpyruvate (PEP) to the 5-hydroxyl of shikimate-3-phosphate (S3P) to produce enolpyruvyl shikimate-3-phosphate and inorganic phosphate. This Rhizobium leguminosarum bv. trifolii (strain WSM2304) protein is 3-phosphoshikimate 1-carboxyvinyltransferase.